We begin with the raw amino-acid sequence, 1058 residues long: Ubiquitin-like modifier-activating enzyme 1 (1058 aa).

The tract at residues 1-46 (MSSSPLSKKRRVSGPDPKPGSNCSSAQSVLSEVSSVPTNGMAKNGS) is disordered. At Ser2 the chain carries N-acetylserine. A phosphoserine mark is found at Ser4, Ser13, Ser21, Ser24, and Ser46. A compositionally biased stretch (low complexity) spans 24 to 36 (SSAQSVLSEVSSV). Tyr55 carries the post-translational modification Phosphotyrosine. Tandem repeats lie at residues 63–199 (GHEA…GQLF) and 459–611 (GSDL…QVVI). Residues 63–611 (GHEAMKMLQT…GTKGNVQVVI (549 aa)) form a 2 approximate repeats region. ATP is bound by residues Ala478, Asp504, Arg515, Lys528, and 576–577 (DN). Lys528 bears the N6-succinyllysine mark. Cys632 functions as the Glycyl thioester intermediate in the catalytic mechanism. Lys671 is modified (N6-acetyllysine). Thr800 bears the Phosphothreonine mark. Residues Ser810, Ser816, Ser820, and Ser835 each carry the phosphoserine modification. Lys980 is subject to N6-acetyllysine.

This sequence belongs to the ubiquitin-activating E1 family. In terms of assembly, monomer. Interacts with GAN (via BTB domain). Post-translationally, ISGylated.

The protein localises to the cytoplasm. It is found in the mitochondrion. It localises to the nucleus. The enzyme catalyses ATP + ubiquitin + [E1 ubiquitin-activating enzyme]-L-cysteine = AMP + diphosphate + S-ubiquitinyl-[E1 ubiquitin-activating enzyme]-L-cysteine.. Its pathway is protein modification; protein ubiquitination. Functionally, catalyzes the first step in ubiquitin conjugation to mark cellular proteins for degradation through the ubiquitin-proteasome system. Activates ubiquitin by first adenylating its C-terminal glycine residue with ATP, and thereafter linking this residue to the side chain of a cysteine residue in E1, yielding a ubiquitin-E1 thioester and free AMP. Essential for the formation of radiation-induced foci, timely DNA repair and for response to replication stress. Promotes the recruitment of TP53BP1 and BRCA1 at DNA damage sites. This is Ubiquitin-like modifier-activating enzyme 1 from Rattus norvegicus (Rat).